Consider the following 429-residue polypeptide: Adenylosuccinate synthetase (429 aa).

GTP is bound by residues 13–19 (GDEGKGK) and 41–43 (GHT). The Proton acceptor role is filled by Asp14. Residues Asp14 and Gly41 each coordinate Mg(2+). IMP is bound by residues 14–17 (DEGK), 39–42 (NAGH), Thr130, Arg144, Gln224, Thr239, and Arg303. The active-site Proton donor is His42. 299-305 (ATTGRAR) is a binding site for substrate. Residues Arg305, 331-333 (KLD), and 412-414 (STG) each bind GTP.

It belongs to the adenylosuccinate synthetase family. As to quaternary structure, homodimer. Requires Mg(2+) as cofactor.

It localises to the cytoplasm. It catalyses the reaction IMP + L-aspartate + GTP = N(6)-(1,2-dicarboxyethyl)-AMP + GDP + phosphate + 2 H(+). Its pathway is purine metabolism; AMP biosynthesis via de novo pathway; AMP from IMP: step 1/2. In terms of biological role, plays an important role in the de novo pathway of purine nucleotide biosynthesis. Catalyzes the first committed step in the biosynthesis of AMP from IMP. The chain is Adenylosuccinate synthetase from Psychrobacter cryohalolentis (strain ATCC BAA-1226 / DSM 17306 / VKM B-2378 / K5).